A 385-amino-acid polypeptide reads, in one-letter code: Homoserine O-succinyltransferase (385 aa).

The region spanning 51–360 (NAVLICHALS…DSPHGHDAFL (310 aa)) is the AB hydrolase-1 domain. The active-site Nucleophile is the Ser-157. Residue Arg-227 coordinates substrate. Catalysis depends on residues Asp-323 and His-356. Asp-357 serves as a coordination point for substrate.

This sequence belongs to the AB hydrolase superfamily. MetX family. As to quaternary structure, homodimer.

It localises to the cytoplasm. It catalyses the reaction L-homoserine + succinyl-CoA = O-succinyl-L-homoserine + CoA. It participates in amino-acid biosynthesis; L-methionine biosynthesis via de novo pathway; O-succinyl-L-homoserine from L-homoserine: step 1/1. Its function is as follows. Transfers a succinyl group from succinyl-CoA to L-homoserine, forming succinyl-L-homoserine. The sequence is that of Homoserine O-succinyltransferase from Hahella chejuensis (strain KCTC 2396).